Consider the following 272-residue polypeptide: Flt3 receptor-interacting lectin (272 aa).

An N-terminal signal peptide occupies residues 1–8 (MFPSKVKS). Alpha-D-mannopyranose contacts are provided by aspartate 94 and glycine 112. N-linked (GlcNAc...) asparagine glycosylation is found at asparagine 125 and asparagine 131. Alpha-D-mannopyranose is bound by residues asparagine 152 and 237 to 238 (QD).

This sequence belongs to the leguminous lectin family. In terms of assembly, dimer (alpha/beta)2. Tetramer (alpha/beta)4. Post-translationally, glycosylated at Asn-125 by either a paucimannose type N-glycan (alpha-4) or a single N-acetylglucosamine (alpha-3). Glycosylated at Asn-131 by a paucimannose type N-glycan (alpha-2, alpha-3 and alpha-4). In alpha-2, Asn-125 is deamidated to an Asp, possibly due to the action of intrinsic peptide N-glycosidase (PGNase).

Its subcellular location is the protein storage vacuole lumen. Its function is as follows. Mannose-binding lectin. Accommodates most effectively a non-reducing terminal alpha-d-mannosyl unit. Strongly precipitates murine IgM but not IgG. This chain is Flt3 receptor-interacting lectin, found in Lablab purpureus (Hyacinth bean).